A 244-amino-acid polypeptide reads, in one-letter code: MELIFLSGIKRSGKDTTADYINSNFKSIKYQLAYPIKDALAIAWERKHAENPDVFTELKYEYFEGIGYDRETPLNLNKLDVIELMEETLIYLQRQYLPINGVNILSSLEGGYSYLDIKPYEALREAINNINDTWSIRRLMQALGTDVVVNLFDRMYWVKLFALNYMDYIGSDFDYYVVTDTRQVHEMETARAMGATVIHVVRSGTESTDKHITEAGLPIEEGDLVITNDGSLEELYSKIEKILR.

Residue K10 coordinates dGMP. Positions 11, 13, 15, and 16 each coordinate ATP. DGMP contacts are provided by I36, K37, R70, R137, G144, T145, V149, W157, D180, R182, Q183, E186, and T213.

Belongs to the dNMP kinase family. As to quaternary structure, homodimer. Mg(2+) serves as cofactor.

The enzyme catalyses dTMP + ATP = dTDP + ADP. It catalyses the reaction dGMP + ATP = dGDP + ADP. The catalysed reaction is 5-hydroxymethyl-dCMP + ATP = 5-hydroxymethyl-dCDP + ADP. Functionally, allows the synthesis of deoxyribonucleoside triphosphates necessary for the rapid viral DNA replication. Phosphorylates dGMP, dTMP and 5-hydroxymethyl-dCMP (hmdCMP) while excluding dCMP and dAMP. The phosphorylation of 5-hydroxymethyl-dCMP represents the first step in the replacement of cytosine by hydroxymethylcytosine in new viral DNA genomes. The protein is Deoxynucleotide monophosphate kinase (1) of Escherichia phage RB69 (Bacteriophage RB69).